Consider the following 263-residue polypeptide: MSLNPVIFSIGPVSIYWYSLAYVLGIVFAYWYLHRLDDQKIFTKNFYDSLLTATIVGIILGGRLGYVLIYDPVLYISNPIEILKTWEGGMSFHGGAIGVLLAVIISCRRHNIPIFYALDLVSCGVPIGLFLGRIGNFINGELFGRVTTMPWGMVFPESGDNLLHHPSQLYEALFEGLLLFAVANSLFFLTRIRLYHGALTGIAVMWYGIARFFVEFFREPDYQIGYLWLDLTMGQLLSIPMVLLGMLVYLGALNLKFNTKSVT.

4 consecutive transmembrane segments (helical) span residues 6–26 (VIFS…VLGI), 50–70 (LLTA…VLIY), 85–105 (TWEG…AVII), and 112–132 (IPIF…LFLG). Arginine 133 contacts a 1,2-diacyl-sn-glycero-3-phospho-(1'-sn-glycerol). Transmembrane regions (helical) follow at residues 169–189 (LYEA…LFFL), 197–217 (GALT…VEFF), and 233–253 (MGQL…LGAL).

It belongs to the Lgt family.

It is found in the cell membrane. It catalyses the reaction L-cysteinyl-[prolipoprotein] + a 1,2-diacyl-sn-glycero-3-phospho-(1'-sn-glycerol) = an S-1,2-diacyl-sn-glyceryl-L-cysteinyl-[prolipoprotein] + sn-glycerol 1-phosphate + H(+). It participates in protein modification; lipoprotein biosynthesis (diacylglyceryl transfer). Functionally, catalyzes the transfer of the diacylglyceryl group from phosphatidylglycerol to the sulfhydryl group of the N-terminal cysteine of a prolipoprotein, the first step in the formation of mature lipoproteins. This Wolbachia sp. subsp. Drosophila simulans (strain wRi) protein is Phosphatidylglycerol--prolipoprotein diacylglyceryl transferase.